A 262-amino-acid chain; its full sequence is Phosphonates import ATP-binding protein PhnC (262 aa).

An ABC transporter domain is found at 5–253; that stretch reads IRVEKLAKTF…RFDHLYRSIN (249 aa). 37–44 is an ATP binding site; that stretch reads GPSGSGKS.

Belongs to the ABC transporter superfamily. Phosphonates importer (TC 3.A.1.9.1) family. As to quaternary structure, the complex is composed of two ATP-binding proteins (PhnC), two transmembrane proteins (PhnE) and a solute-binding protein (PhnD).

It is found in the cell inner membrane. The enzyme catalyses phosphonate(out) + ATP + H2O = phosphonate(in) + ADP + phosphate + H(+). Functionally, part of the ABC transporter complex PhnCDE involved in phosphonates import. Responsible for energy coupling to the transport system. The protein is Phosphonates import ATP-binding protein PhnC of Escherichia coli O6:H1 (strain CFT073 / ATCC 700928 / UPEC).